A 263-amino-acid chain; its full sequence is Small ribosomal subunit protein eS4 (263 aa).

The S4 RNA-binding domain maps to 42 to 104; that stretch reads LPLIIFLRNR…TGENFRLIYD (63 aa).

This sequence belongs to the eukaryotic ribosomal protein eS4 family.

The protein is Small ribosomal subunit protein eS4 (RPS4) of Bos taurus (Bovine).